A 373-amino-acid chain; its full sequence is Dual-specificity RNA methyltransferase RlmN (373 aa).

The Proton acceptor role is filled by Glu-94. Positions 100–339 (DGDRATLCVS…VTVRKTRGDD (240 aa)) constitute a Radical SAM core domain. The cysteines at positions 107 and 344 are disulfide-linked. The [4Fe-4S] cluster site is built by Cys-114, Cys-118, and Cys-121. S-adenosyl-L-methionine is bound by residues 168–169 (GE), Ser-200, 222–224 (SLH), and Asn-301. Cys-344 serves as the catalytic S-methylcysteine intermediate.

Belongs to the radical SAM superfamily. RlmN family. It depends on [4Fe-4S] cluster as a cofactor.

Its subcellular location is the cytoplasm. It catalyses the reaction adenosine(2503) in 23S rRNA + 2 reduced [2Fe-2S]-[ferredoxin] + 2 S-adenosyl-L-methionine = 2-methyladenosine(2503) in 23S rRNA + 5'-deoxyadenosine + L-methionine + 2 oxidized [2Fe-2S]-[ferredoxin] + S-adenosyl-L-homocysteine. The catalysed reaction is adenosine(37) in tRNA + 2 reduced [2Fe-2S]-[ferredoxin] + 2 S-adenosyl-L-methionine = 2-methyladenosine(37) in tRNA + 5'-deoxyadenosine + L-methionine + 2 oxidized [2Fe-2S]-[ferredoxin] + S-adenosyl-L-homocysteine. Specifically methylates position 2 of adenine 2503 in 23S rRNA and position 2 of adenine 37 in tRNAs. m2A2503 modification seems to play a crucial role in the proofreading step occurring at the peptidyl transferase center and thus would serve to optimize ribosomal fidelity. This Photobacterium profundum (strain SS9) protein is Dual-specificity RNA methyltransferase RlmN.